The following is a 95-amino-acid chain: Glutaredoxin 1 (95 aa).

A Glutaredoxin domain is found at 1 to 95; it reads MNKSILHTII…DKLLEHQPKN (95 aa). A disulfide bond links Cys-17 and Cys-20.

The protein belongs to the glutaredoxin family. In terms of assembly, monomer.

Its subcellular location is the cytoplasm. Its function is as follows. Has a glutathione-disulfide oxidoreductase activity in the presence of NADPH and glutathione reductase. Reduces low molecular weight disulfides and proteins. This Rickettsia prowazekii (strain Madrid E) protein is Glutaredoxin 1 (grxC1).